The sequence spans 232 residues: Cilia- and flagella-associated protein 95 (232 aa).

The Extracellular portion of the chain corresponds to 1–96 (MDSSDSSCQE…PVWISETREK (96 aa)). N-linked (GlcNAc...) asparagine glycosylation is present at Asn-75. The helical transmembrane segment at 97-115 (MAQVCLNTKLAKIKSKALL) threads the bilayer. The Cytoplasmic portion of the chain corresponds to 116-232 (NEETMNSGII…TGGPIAPFLK (117 aa)). The segment at 153 to 163 (LTTYAEEYAPP) is mn.

In terms of assembly, microtubule inner protein component of sperm flagellar doublet microtubules. Interacts with MYH9. Interacts with MYH10. Expressed in trachea multiciliated cells.

It localises to the cytoplasm. Its subcellular location is the cytoskeleton. It is found in the cilium axoneme. The protein localises to the flagellum axoneme. The protein resides in the cell membrane. Its function is as follows. Microtubule inner protein (MIP) part of the dynein-decorated doublet microtubules (DMTs) in cilia axoneme, which is required for motile cilia beating. The sequence is that of Cilia- and flagella-associated protein 95 from Bos taurus (Bovine).